A 113-amino-acid chain; its full sequence is Large ribosomal subunit protein uL22 (113 aa).

It belongs to the universal ribosomal protein uL22 family. Part of the 50S ribosomal subunit.

In terms of biological role, this protein binds specifically to 23S rRNA; its binding is stimulated by other ribosomal proteins, e.g. L4, L17, and L20. It is important during the early stages of 50S assembly. It makes multiple contacts with different domains of the 23S rRNA in the assembled 50S subunit and ribosome. Functionally, the globular domain of the protein is located near the polypeptide exit tunnel on the outside of the subunit, while an extended beta-hairpin is found that lines the wall of the exit tunnel in the center of the 70S ribosome. In Pelotomaculum thermopropionicum (strain DSM 13744 / JCM 10971 / SI), this protein is Large ribosomal subunit protein uL22.